The following is a 472-amino-acid chain: F420-non-reducing hydrogenase subunit A (472 aa).

Ni(2+)-binding residues include C61, C64, C442, and C445.

This sequence belongs to the [NiFe]/[NiFeSe] hydrogenase large subunit family. In terms of assembly, the F420-non-reducing hydrogenase is composed of three subunits; MvhA, MvhD and MvhG. It forms a complex with the heterodisulfide reductase (hdr). Ni(2+) is required as a cofactor.

Functionally, part of a complex that provides reducing equivalents for heterodisulfide reductase. The polypeptide is F420-non-reducing hydrogenase subunit A (mvhA) (Methanothermobacter marburgensis (strain ATCC BAA-927 / DSM 2133 / JCM 14651 / NBRC 100331 / OCM 82 / Marburg) (Methanobacterium thermoautotrophicum)).